The primary structure comprises 98 residues: U10-barytoxin-Tl1a (98 aa).

Positions 1–21 (MKTLVLVAVLGVASLYLLSSA) are cleaved as a signal peptide. Residues 22-50 (SEVQQLSPAEEEFRAFVSTFGGLFETEER) constitute a propeptide that is removed on maturation. 3 cysteine pairs are disulfide-bonded: cysteine 57/cysteine 71, cysteine 64/cysteine 76, and cysteine 70/cysteine 89.

The protein belongs to the neurotoxin 10 (Hwtx-1) family. 27 (ICK-3) subfamily. In terms of tissue distribution, expressed by the venom gland.

The protein localises to the secreted. Its function is as follows. Ion channel inhibitor. The chain is U10-barytoxin-Tl1a from Trittame loki (Brush-footed trapdoor spider).